The following is a 524-amino-acid chain: Glucose-6-phosphate isomerase (524 aa).

E322 (proton donor) is an active-site residue. Catalysis depends on residues H351 and K453.

It belongs to the GPI family.

The protein resides in the cytoplasm. The enzyme catalyses alpha-D-glucose 6-phosphate = beta-D-fructose 6-phosphate. Its pathway is carbohydrate biosynthesis; gluconeogenesis. It functions in the pathway carbohydrate degradation; glycolysis; D-glyceraldehyde 3-phosphate and glycerone phosphate from D-glucose: step 2/4. Catalyzes the reversible isomerization of glucose-6-phosphate to fructose-6-phosphate. This Prochlorococcus marinus (strain NATL2A) protein is Glucose-6-phosphate isomerase.